We begin with the raw amino-acid sequence, 129 residues long: Glycine cleavage system H protein (129 aa).

The Lipoyl-binding domain occupies 24 to 106 (LLKIGVSEFA…IGNGWLLIIK (83 aa)). Lysine 65 carries the post-translational modification N6-lipoyllysine.

The protein belongs to the GcvH family. In terms of assembly, the glycine cleavage system is composed of four proteins: P, T, L and H. (R)-lipoate is required as a cofactor.

The glycine cleavage system catalyzes the degradation of glycine. The H protein shuttles the methylamine group of glycine from the P protein to the T protein. This Prochlorococcus marinus (strain MIT 9515) protein is Glycine cleavage system H protein.